Reading from the N-terminus, the 111-residue chain is MAAKIFPVVKFATKVTIAGGALYVAYDSGLLGGSNEGSVALARAKSAIPPAVDEWMKYFGFELPATPKIEFSPLDAWNSGVQKSIHALSVAPSTVGDYTKQGLQYVKDLSK.

Residues 8-26 (VVKFATKVTIAGGALYVAY) form a helical membrane-spanning segment.

The protein belongs to the MICOS complex subunit Mic13 family. Component of the mitochondrial contact site and cristae organizing system (MICOS) complex.

It is found in the mitochondrion inner membrane. Functionally, component of the MICOS complex, a large protein complex of the mitochondrial inner membrane that plays crucial roles in the maintenance of crista junctions, inner membrane architecture, and formation of contact sites to the outer membrane. Constituent of mature MICOS complex, it is required for the formation of cristae junction (CJ) and maintenance of cristae morphology. Required for the incorporation of MIC10 into the MICOS complex. This is MICOS complex subunit MIC13 from Danio rerio (Zebrafish).